The chain runs to 346 residues: uncharacterized protein (346 aa).

Transmembrane regions (helical) follow at residues 15–35 (YLRG…LLTV), 55–75 (VEAR…YLFI), 93–113 (ILVL…EALT), 139–159 (ILLL…PLIL), 182–202 (IFTF…YCYV), 229–249 (LGVA…LLLL), 269–289 (LTNY…FHLF), and 295–315 (LQSL…SAMW).

To E.coli YeiB, B.subtilis YxaH and B.subtilis YrkO.

Its subcellular location is the cell membrane. Its function is as follows. Involved in transport. This is an uncharacterized protein from Bacillus acidopullulyticus.